Here is a 953-residue protein sequence, read N- to C-terminus: TPR repeat-containing protein ZIP4 (953 aa).

The stretch at 129–162 (ASFFHRSGLAWLDLGRVDLASACFEKATPLVSAA) is one TPR 1 repeat. The disordered stretch occupies residues 248–269 (AASPSSSSPRTPPYGGATPKTP). TPR repeat units follow at residues 432-465 (HALL…VSRD) and 473-506 (ADCF…EPNI). Residues 924-953 (RVSGDEPDECSQEEAPKASISGSMSQPVLV) form a disordered region. The segment covering 943–953 (ISGSMSQPVLV) has biased composition (polar residues).

It is found in the nucleus. The protein resides in the chromosome. Its function is as follows. Required for crossover formation, complete synapsis of homologous chromosomes and bivalent formation during meiosis. Is specific to recombination events resulting in interference-sensitive crossovers (class I meiotic crossover) and works cooperatively with MER3 to promote crossovers. The polypeptide is TPR repeat-containing protein ZIP4 (Oryza sativa subsp. indica (Rice)).